The primary structure comprises 310 residues: MKVAVLGAAGGIGQALSLLLKTGLPAGSELSLYDVAPVVPGVAVDLSHIPTAVKVAGFGADALNEALKDADIVLIPAGMPRKPGMDRADLFNVNAGIIKTLAEGIVASCPKALVGIITNPVNGTVPIVAEVFKKAGTYDAKRVFGITTLDVIRSEAFVAELKGVDVATVKVPVIGGHSGTTILPLLSQVEGVSFTDEEVAALTPRIQNAGTEVVNAKAGGGSATLSMGAAAARFCMSLVKGLQGEDVVDYAYVAVENGDAEYFAHPVRLGKNGVEEILSYGELSAFETKAKNDMLETLKKDIKEGVDFMA.

NAD(+) contacts are provided by residues 7-13 and aspartate 34; that span reads GAAGGIG. 2 residues coordinate substrate: arginine 81 and arginine 87. Residues asparagine 94 and 117–119 each bind NAD(+); that span reads ITN. Substrate contacts are provided by asparagine 119 and arginine 153. The active-site Proton acceptor is histidine 177. An NAD(+)-binding site is contributed by methionine 227.

Belongs to the LDH/MDH superfamily. MDH type 1 family. In terms of assembly, homodimer.

It catalyses the reaction (S)-malate + NAD(+) = oxaloacetate + NADH + H(+). In terms of biological role, catalyzes the reversible oxidation of malate to oxaloacetate. In Pseudoalteromonas translucida (strain TAC 125), this protein is Malate dehydrogenase.